Consider the following 262-residue polypeptide: Rhomboid-type serine protease 2 (262 aa).

The Cytoplasmic portion of the chain corresponds to 1–16 (MNWKSYVFPGGHPPAA). The helical transmembrane segment at 17–37 (LTTGLVVFLTAIYLLSFIFAL) threads the bilayer. Over 38 to 57 (REDLSLAPESLFKLQMSRLS) the chain is Lumenal. A helical transmembrane segment spans residues 58 to 78 (LYPLIHLSLPHLLFNVLAIWA). Residues 79–89 (PLNLFEETHGT) are Cytoplasmic-facing. The helical transmembrane segment at 90 to 110 (VYTGVFLNLSALFAGILYCLL) threads the bilayer. Residues 111-112 (GK) are Lumenal-facing. Residues 113–133 (LLYPEALVAGASGWCFTLFAY) traverse the membrane as a helical segment. Ser124 functions as the Nucleophile in the catalytic mechanism. Residues 134–151 (YSFKESQIRPRTRIFRTD) lie on the Cytoplasmic side of the membrane. Residues 152–168 (YSIPTLYTPLVLLVAIA) traverse the membrane as a helical segment. Topologically, residues 169–174 (VVIPGS) are lumenal. A helical transmembrane segment spans residues 175-191 (SFWGHFFGLCVGYAIGY). His179 is a catalytic residue. Residues 192–262 (KESWFNKITP…DNSGTVLGTA (71 aa)) lie on the Cytoplasmic side of the membrane. Positions 243-262 (STETPLPLHNDNSGTVLGTA) are disordered. Residues 252–262 (NDNSGTVLGTA) show a composition bias toward polar residues.

This sequence belongs to the peptidase S54 family. In terms of assembly, interacts with SNX3.

The protein resides in the golgi apparatus membrane. Its subcellular location is the golgi apparatus. It is found in the cis-Golgi network membrane. It catalyses the reaction Cleaves type-1 transmembrane domains using a catalytic dyad composed of serine and histidine that are contributed by different transmembrane domains.. Its function is as follows. Probable rhomboid-type serine protease that catalyzes intramembrane proteolysis. This chain is Rhomboid-type serine protease 2 (RBD2), found in Saccharomyces cerevisiae (strain ATCC 204508 / S288c) (Baker's yeast).